Reading from the N-terminus, the 372-residue chain is NAD(P)H-quinone oxidoreductase subunit 1 (372 aa).

The next 8 helical transmembrane spans lie at 27 to 47, 97 to 117, 128 to 148, 176 to 196, 204 to 224, 266 to 286, 308 to 328, and 347 to 367; these read IIWL…GVLV, ILFT…WLIV, VGIG…GLLM, LALS…IDIV, ILSW…ICAL, ILSA…PIPV, SIGI…AILL, and FLLP…LAFP.

This sequence belongs to the complex I subunit 1 family. As to quaternary structure, NDH-1 is composed of at least 11 different subunits.

The protein localises to the cellular thylakoid membrane. It carries out the reaction a plastoquinone + NADH + (n+1) H(+)(in) = a plastoquinol + NAD(+) + n H(+)(out). The catalysed reaction is a plastoquinone + NADPH + (n+1) H(+)(in) = a plastoquinol + NADP(+) + n H(+)(out). Its function is as follows. NDH-1 shuttles electrons from an unknown electron donor, via FMN and iron-sulfur (Fe-S) centers, to quinones in the respiratory and/or the photosynthetic chain. The immediate electron acceptor for the enzyme in this species is believed to be plastoquinone. Couples the redox reaction to proton translocation, and thus conserves the redox energy in a proton gradient. This is NAD(P)H-quinone oxidoreductase subunit 1 from Prochlorococcus marinus (strain MIT 9301).